The chain runs to 1469 residues: Regulation of nuclear pre-mRNA domain-containing protein 2 (1469 aa).

Residue A2 is modified to N-acetylalanine. Residue S16 is modified to Phosphoserine. The region spanning 19-149 is the CID domain; it reads SAGALESSLD…ALREALMDRA (131 aa). 2 disordered regions span residues 329–445 and 489–524; these read STLP…TAAP and TGVSSASRPSPGIPTSPSNLSSGLKTPAPATTPSHN. Over residues 370–386 the composition is skewed to basic and acidic residues; it reads ESDKSATPEPVTDNRDV. The residue at position 374 (S374) is a Phosphoserine. T376 carries the phosphothreonine modification. A compositionally biased stretch (acidic residues) spans 387–396; it reads EDMELSDVED. The residue at position 392 (S392) is a Phosphoserine. A compositionally biased stretch (basic and acidic residues) spans 397 to 412; the sequence is DGSKIIVEDRKEKPVE. A compositionally biased stretch (polar residues) spans 419–430; it reads GVPTKSTESVSK. Residues 434-445 show a composition bias toward pro residues; sequence CAPPSVPTTAAP. S492, S495, S498, and S504 each carry phosphoserine. T536 is subject to Phosphothreonine. The disordered stretch occupies residues 572–594; sequence ASEVTSQSTTASPASTTGSAVKG. A compositionally biased stretch (low complexity) spans 576–591; that stretch reads TSQSTTASPASTTGSA. S583 and S612 each carry phosphoserine. T617 carries the phosphothreonine modification. S633 carries the phosphoserine modification. Over residues 647–656 the composition is skewed to polar residues; sequence SLGFTGTHNP. 7 disordered regions span residues 647-686, 716-867, 919-1013, 1033-1140, 1154-1183, 1204-1328, and 1368-1414; these read SLGFTGTHNPSPAAPPTEVAVCQSSEVSKPKPESESTSPS, SSAP…AMMN, SENC…SGVE, KNAS…HGRE, SSFDNGPSSASELASLGGGGSGGLTGFKTT, FNST…PTPP, and GPGL…HRDA. Phosphoserine is present on residues S682, S684, S735, and S738. Phosphothreonine is present on T742. Position 749 is a phosphoserine (S749). T751 is modified (phosphothreonine). Residues 761 to 771 show a composition bias toward polar residues; that stretch reads PTSSSVDTMSL. S777 and S781 each carry phosphoserine. Residues 777 to 787 are compositionally biased toward low complexity; it reads SPGSSTPSSTR. T782 carries the phosphothreonine modification. S788, S836, S845, S919, and S947 each carry phosphoserine. Positions 959 to 982 are enriched in polar residues; sequence PDSNHSGLSQSTAGHLTLPQTQYP. Residues S984 and S995 each carry the phosphoserine modification. Residues 1047 to 1073 are compositionally biased toward polar residues; that stretch reads QTPNKGTSSDGVSLSNLTQPSLPTTDQ. S1086 and S1117 each carry phosphoserine. The segment covering 1159–1168 has biased composition (low complexity); sequence GPSSASELAS. A compositionally biased stretch (gly residues) spans 1169-1178; that stretch reads LGGGGSGGLT. Pro residues predominate over residues 1272 to 1295; sequence GPPPPPGEHSGVPFPPPPPPPPPG. At R1375 the chain carries Asymmetric dimethylarginine. Composition is skewed to low complexity over residues 1377 to 1390 and 1400 to 1409; these read SLSLPSHPLEHLGP and TSSSGLPLSP. An asymmetric dimethylarginine mark is found at R1432 and R1438.

In terms of assembly, associates with the RNA polymerase II complex.

This chain is Regulation of nuclear pre-mRNA domain-containing protein 2 (Rprd2), found in Mus musculus (Mouse).